A 623-amino-acid chain; its full sequence is Glutamine--fructose-6-phosphate aminotransferase [isomerizing] (623 aa).

Cysteine 2 acts as the Nucleophile; for GATase activity in catalysis. The region spanning 2 to 228 (CGIVGYIGQA…NDQVVTITAD (227 aa)) is the Glutamine amidotransferase type-2 domain. SIS domains lie at 295-435 (IDEA…LRGN) and 468-613 (LGQD…VDQP). Lysine 618 serves as the catalytic For Fru-6P isomerization activity.

In terms of assembly, homodimer.

It localises to the cytoplasm. The enzyme catalyses D-fructose 6-phosphate + L-glutamine = D-glucosamine 6-phosphate + L-glutamate. In terms of biological role, catalyzes the first step in hexosamine metabolism, converting fructose-6P into glucosamine-6P using glutamine as a nitrogen source. This is Glutamine--fructose-6-phosphate aminotransferase [isomerizing] from Corynebacterium glutamicum (strain ATCC 13032 / DSM 20300 / JCM 1318 / BCRC 11384 / CCUG 27702 / LMG 3730 / NBRC 12168 / NCIMB 10025 / NRRL B-2784 / 534).